The chain runs to 151 residues: Putative calcium-binding protein CML23 (151 aa).

EF-hand domains follow at residues 2 to 37 (VASD…SLGE), 39 to 74 (MPDE…MEAD), 84 to 119 (ETCR…LGTH), and 120 to 151 (LDVA…MMMA). The Ca(2+) site is built by D15, D17, D19, K21, E26, D52, D54, D56, and E63. Residues D133, N135, D137, and E144 each coordinate Ca(2+).

Its function is as follows. Potential calcium sensor. The protein is Putative calcium-binding protein CML23 (CML23) of Oryza sativa subsp. japonica (Rice).